The primary structure comprises 182 residues: Ribosome maturation factor RimM (182 aa).

Positions 102–182 (EEGDYYWKDL…SIEVDWDPGF (81 aa)) constitute a PRC barrel domain.

This sequence belongs to the RimM family. In terms of assembly, binds ribosomal protein uS19.

Its subcellular location is the cytoplasm. Its function is as follows. An accessory protein needed during the final step in the assembly of 30S ribosomal subunit, possibly for assembly of the head region. Essential for efficient processing of 16S rRNA. May be needed both before and after RbfA during the maturation of 16S rRNA. It has affinity for free ribosomal 30S subunits but not for 70S ribosomes. This chain is Ribosome maturation factor RimM, found in Escherichia fergusonii (strain ATCC 35469 / DSM 13698 / CCUG 18766 / IAM 14443 / JCM 21226 / LMG 7866 / NBRC 102419 / NCTC 12128 / CDC 0568-73).